Here is a 513-residue protein sequence, read N- to C-terminus: Ribonuclease Y (513 aa).

Residues 6–26 (YIIIAVVIIIICVILGLYIVD) traverse the membrane as a helical segment. Residues 203–288 (TVHVVNLPND…EMVEKAKKEV (86 aa)) enclose the KH domain. The HD domain maps to 329–422 (VLKHSIEVSH…VQAADAISAA (94 aa)).

Belongs to the RNase Y family.

It localises to the cell membrane. Endoribonuclease that initiates mRNA decay. The chain is Ribonuclease Y from Clostridium botulinum (strain ATCC 19397 / Type A).